A 334-amino-acid polypeptide reads, in one-letter code: Cytoskeleton protein RodZ (334 aa).

The Cytoplasmic portion of the chain corresponds to 1-111 (MNTEATHDQN…LGKRRKKRDG (111 aa)). In terms of domain architecture, HTH cro/C1-type spans 19–71 (LRNAREQLGLSQQAVAERLCLKVSTVRDIEEDKAPSDLASTFLRGYIRSYARL). The H-T-H motif DNA-binding region spans 30-49 (QQAVAERLCLKVSTVRDIEE). A helical; Signal-anchor for type II membrane protein membrane pass occupies residues 112–132 (WLMSFTWLVLFVVVGLTGAWW). Topologically, residues 133-334 (WQNHKAQQEE…TLNAEPTPAQ (202 aa)) are periplasmic. A disordered region spans residues 155–241 (NADKDSGQSV…PSALPTSQAG (87 aa)). Over residues 161–175 (GQSVPLDTGAVTSQD) the composition is skewed to polar residues. 2 stretches are compositionally biased toward low complexity: residues 176–211 (TTPAQTAPAPATPVDSTAATQTPAPTAAATQNTVVA) and 219–241 (TAATSAAPAATETPSALPTSQAG).

This sequence belongs to the RodZ family.

The protein localises to the cell inner membrane. Functionally, cytoskeletal protein that is involved in cell-shape control through regulation of the length of the long axis. This chain is Cytoskeleton protein RodZ, found in Salmonella dublin (strain CT_02021853).